Reading from the N-terminus, the 761-residue chain is Ribonucleoside-diphosphate reductase 1 subunit alpha (761 aa).

The ATP-cone domain occupies 5-95; that stretch reads LLVTKRDGST…IFHLRKKAYG (91 aa). ATP-binding positions include Lys9, 15–21, Thr55, and Lys91; that span reads ERINLDK. Residue Thr209 coordinates GDP. Cys225 and Cys462 form a disulfide bridge. DTTP contacts are provided by residues 232–234, Arg262, and Arg269; that span reads DSL. Lys283 carries the N6-acetyllysine modification. Asn437 serves as a coordination point for GDP. The Proton acceptor role is filled by Asn437. Residue Cys439 is the Cysteine radical intermediate of the active site. GDP contacts are provided by residues Glu441 and 623 to 625; that span reads ETS. Residue Glu441 is the Proton acceptor of the active site.

This sequence belongs to the ribonucleoside diphosphate reductase large chain family. In terms of assembly, tetramer of two alpha (R1) and two beta (R2) subunits. The B1 protein is a dimer of alpha subunits. A radical transfer pathway occurs between 'Tyr-122' of R2 and R1. Post-translationally, binding of the substrate occurs primarily when the active-site cysteines are reduced.

It catalyses the reaction a 2'-deoxyribonucleoside 5'-diphosphate + [thioredoxin]-disulfide + H2O = a ribonucleoside 5'-diphosphate + [thioredoxin]-dithiol. Its activity is regulated as follows. Under complex allosteric control mediated by deoxynucleoside triphosphates and ATP binding to separate specificity and activation sites on the alpha subunit. The type of nucleotide bound at the specificity site determines substrate preference. It seems probable that ATP makes the enzyme reduce CDP and UDP, dGTP favors ADP reduction and dTTP favors GDP reduction. Stimulated by ATP and inhibited by dATP binding to the activity site. In vitro, its activity is increased by dithiothreitol (DTT) or thioredoxins (non-specific). Inhibited by hydroxyurea, leads to dNTP depletion, replication fork arrest and genomic instability. In terms of biological role, provides the precursors necessary for DNA synthesis. Catalyzes the biosynthesis of deoxyribonucleotides from the corresponding ribonucleotides. R1 contains the binding sites for both substrates and allosteric effectors and carries out the actual reduction of the ribonucleotide. It also provides redox-active cysteines. In Escherichia coli (strain K12), this protein is Ribonucleoside-diphosphate reductase 1 subunit alpha (nrdA).